A 221-amino-acid chain; its full sequence is MLSTGVKSLDELLGGGFGEGVLTQIYGPYATGKTTLAVQTGLLSGKKVAYVDTEGGFSPERLSQMASARGLDPEEALSRFLLFTPGDIREQRRVIGSLKRLITPEFSLVVVDSITAHYRAEEDWRSLTSELGKQLQVLLWIARKHRIPVLVINQVHFDARAERTRPVAEQTLGYRCKDILRLDKLPTPGKRVAILERHRFRPEGGMVYFKITEKGIEDVSD.

It belongs to the eukaryotic RecA-like protein family. RadB subfamily.

Functionally, involved in DNA repair and in homologous recombination. May regulate the cleavage reactions of the branch-structured DNA. Has a very weak ATPase activity that is not stimulated by DNA. Binds DNA but does not promote DNA strands exchange. The protein is DNA repair and recombination protein RadB of Thermococcus gammatolerans (strain DSM 15229 / JCM 11827 / EJ3).